A 119-amino-acid polypeptide reads, in one-letter code: Protein RALF-like 22 (119 aa).

Positions 1–23 (MTNTRAIYAVIAILAIVISAVES) are cleaved as a signal peptide. Residues 24–70 (TGDFGDSLDFVRAGSSSLFSGCTGSIAECIAEEEEMEFDSDISRRIL) constitute a propeptide, removed in mature form. Intrachain disulfides connect Cys88–Cys98 and Cys111–Cys117.

This sequence belongs to the plant rapid alkalinization factor (RALF) family. Proteolytically cleaved, probably by S1P, a subtilisin-like serine protease (subtilase).

Its subcellular location is the secreted. Functionally, cell signaling peptide that may regulate plant stress, growth, and development. Mediates a rapid alkalinization of extracellular space by mediating a transient increase in the cytoplasmic Ca(2+) concentration leading to a calcium-dependent signaling events through a cell surface receptor and a concomitant activation of some intracellular mitogen-activated protein kinases. This Arabidopsis thaliana (Mouse-ear cress) protein is Protein RALF-like 22 (RALFL22).